Reading from the N-terminus, the 618-residue chain is Proline--tRNA ligase (618 aa).

Belongs to the class-II aminoacyl-tRNA synthetase family. ProS type 1 subfamily. As to quaternary structure, homodimer.

The protein resides in the cytoplasm. The catalysed reaction is tRNA(Pro) + L-proline + ATP = L-prolyl-tRNA(Pro) + AMP + diphosphate. Its function is as follows. Catalyzes the attachment of proline to tRNA(Pro) in a two-step reaction: proline is first activated by ATP to form Pro-AMP and then transferred to the acceptor end of tRNA(Pro). As ProRS can inadvertently accommodate and process non-cognate amino acids such as alanine and cysteine, to avoid such errors it has two additional distinct editing activities against alanine. One activity is designated as 'pretransfer' editing and involves the tRNA(Pro)-independent hydrolysis of activated Ala-AMP. The other activity is designated 'posttransfer' editing and involves deacylation of mischarged Ala-tRNA(Pro). The misacylated Cys-tRNA(Pro) is not edited by ProRS. The chain is Proline--tRNA ligase from Streptococcus uberis (strain ATCC BAA-854 / 0140J).